A 726-amino-acid polypeptide reads, in one-letter code: Netrin-A (726 aa).

The first 29 residues, methionine 1–methionine 29, serve as a signal peptide directing secretion. Residues glutamate 46 to arginine 312 enclose the Laminin N-terminal domain. Asparagine 108, asparagine 112, and asparagine 127 each carry an N-linked (GlcNAc...) asparagine glycan. 12 disulfides stabilise this stretch: cysteine 313–cysteine 322, cysteine 315–cysteine 332, cysteine 334–cysteine 343, cysteine 346–cysteine 366, cysteine 369–cysteine 378, cysteine 371–cysteine 396, cysteine 399–cysteine 408, cysteine 411–cysteine 429, cysteine 432–cysteine 444, cysteine 434–cysteine 451, cysteine 453–cysteine 462, and cysteine 465–cysteine 479. Laminin EGF-like domains are found at residues cysteine 313 to glutamate 368, cysteine 369 to alanine 431, and cysteine 432 to lysine 481. A glycan (N-linked (GlcNAc...) asparagine) is linked at asparagine 445. The segment at leucine 490–alanine 516 is disordered. 2 cysteine pairs are disulfide-bonded: cysteine 533–cysteine 671 and cysteine 549–cysteine 725. The NTR domain occupies cysteine 533 to cysteine 725. Residues asparagine 652 and asparagine 679 are each glycosylated (N-linked (GlcNAc...) asparagine).

In terms of tissue distribution, at the midline of developing CNS at the time of commissure formation and in different subsets of neurons, muscles, and epidermal patches.

The protein resides in the secreted. It is found in the extracellular space. It localises to the extracellular matrix. Functionally, netrins control guidance of CNS commissural axons at the midline and peripheral motor axons to their target muscles. The protein is Netrin-A (NetA) of Drosophila melanogaster (Fruit fly).